We begin with the raw amino-acid sequence, 244 residues long: MSKLDLNALNELPKVDRILALAETNAQLEKLDAEGRVAWALDNLPGEYVLSSSFGIQAAVSLHLVNQICPDIPVILTDTGYLFPETYRFIDELTDKLKLNLKVYRATESAAWQEARYGKLWEQGVEGIEKYNDINKVEPMNRALKELNAQTWFAGLRREQSGSRANLPVLAIQRGVFKVLPIIDWDNRTIYQYLQKHGLKYHPLWDEGYLSVGDTHTTRKWEPSMAEEETRFFGLKRECGLHEG.

Cys239 acts as the Nucleophile; cysteine thiosulfonate intermediate in catalysis.

This sequence belongs to the PAPS reductase family. CysH subfamily.

It is found in the cytoplasm. The enzyme catalyses [thioredoxin]-disulfide + sulfite + adenosine 3',5'-bisphosphate + 2 H(+) = [thioredoxin]-dithiol + 3'-phosphoadenylyl sulfate. Its pathway is sulfur metabolism; hydrogen sulfide biosynthesis; sulfite from sulfate: step 3/3. Catalyzes the formation of sulfite from phosphoadenosine 5'-phosphosulfate (PAPS) using thioredoxin as an electron donor. This chain is Phosphoadenosine 5'-phosphosulfate reductase, found in Shigella dysenteriae serotype 1 (strain Sd197).